Reading from the N-terminus, the 485-residue chain is Glycogen synthase (485 aa).

K18 is an ADP-alpha-D-glucose binding site.

This sequence belongs to the glycosyltransferase 1 family. Bacterial/plant glycogen synthase subfamily.

It catalyses the reaction [(1-&gt;4)-alpha-D-glucosyl](n) + ADP-alpha-D-glucose = [(1-&gt;4)-alpha-D-glucosyl](n+1) + ADP + H(+). It participates in glycan biosynthesis; glycogen biosynthesis. Synthesizes alpha-1,4-glucan chains using ADP-glucose. In Dechloromonas aromatica (strain RCB), this protein is Glycogen synthase.